A 154-amino-acid chain; its full sequence is Lipoprotein signal peptidase (154 aa).

2 helical membrane passes run 55 to 75 (GHMW…IYIM) and 84 to 104 (LFSI…IDRV). Residues aspartate 111 and aspartate 129 contribute to the active site. Residues 124–144 (IFNVADAALSVGVVLMLVYVF) traverse the membrane as a helical segment.

Belongs to the peptidase A8 family.

It is found in the cell membrane. It carries out the reaction Release of signal peptides from bacterial membrane prolipoproteins. Hydrolyzes -Xaa-Yaa-Zaa-|-(S,diacylglyceryl)Cys-, in which Xaa is hydrophobic (preferably Leu), and Yaa (Ala or Ser) and Zaa (Gly or Ala) have small, neutral side chains.. It functions in the pathway protein modification; lipoprotein biosynthesis (signal peptide cleavage). Functionally, this protein specifically catalyzes the removal of signal peptides from prolipoproteins. This Listeria monocytogenes serotype 4b (strain CLIP80459) protein is Lipoprotein signal peptidase.